The chain runs to 87 residues: Large ribosomal subunit protein bL27 (87 aa).

This sequence belongs to the bacterial ribosomal protein bL27 family.

This is Large ribosomal subunit protein bL27 from Renibacterium salmoninarum (strain ATCC 33209 / DSM 20767 / JCM 11484 / NBRC 15589 / NCIMB 2235).